The following is a 429-amino-acid chain: 4-hydroxybutyrate coenzyme A transferase (429 aa).

215 to 219 serves as a coordination point for CoA; that stretch reads GIGAI. Residue glutamate 238 is the 5-glutamyl coenzyme A thioester intermediate of the active site. Glycine 336 serves as a coordination point for CoA.

The protein belongs to the acetyl-CoA hydrolase/transferase family.

This chain is 4-hydroxybutyrate coenzyme A transferase (cat2), found in Clostridium kluyveri (strain ATCC 8527 / DSM 555 / NBRC 12016 / NCIMB 10680 / K1).